We begin with the raw amino-acid sequence, 321 residues long: Hydropyrene synthase (321 aa).

Mg(2+)-binding residues include Asp-82, Asn-225, Ser-229, and Glu-233. A DDxx(x)D/E motif motif is present at residues 82 to 87 (DDRAID). An NDxxSxxxD/E motif motif is present at residues 225–233 (NDLHSFARE).

Belongs to the terpene synthase family. It depends on Mg(2+) as a cofactor.

The enzyme catalyses (2E,6E,10E)-geranylgeranyl diphosphate = hydropyrene + diphosphate. It carries out the reaction (2E,6E,10E)-geranylgeranyl diphosphate + H2O = hydropyrenol + diphosphate. The catalysed reaction is (2E,6E,10E)-geranylgeranyl diphosphate = isoelisabethatriene + diphosphate. Its pathway is secondary metabolite biosynthesis; terpenoid biosynthesis. Terpene synthase that catalyzes the conversion of geranylgeranyl diphosphate (GGPP) into a mixture of diterpenes, including hydropyrene (HP), hydropyrenol (HPol), isoelisabethatriene and traces of isoelisabethatriene B. Hydropyrene is the main product. Some other diterpenoids are also produced in very low quantities. This chain is Hydropyrene synthase, found in Streptomyces clavuligerus.